A 105-amino-acid chain; its full sequence is Phosphoribosyl-ATP pyrophosphatase (105 aa).

The protein belongs to the PRA-PH family.

Its subcellular location is the cytoplasm. The catalysed reaction is 1-(5-phospho-beta-D-ribosyl)-ATP + H2O = 1-(5-phospho-beta-D-ribosyl)-5'-AMP + diphosphate + H(+). Its pathway is amino-acid biosynthesis; L-histidine biosynthesis; L-histidine from 5-phospho-alpha-D-ribose 1-diphosphate: step 2/9. This chain is Phosphoribosyl-ATP pyrophosphatase, found in Ruegeria sp. (strain TM1040) (Silicibacter sp.).